The primary structure comprises 451 residues: Protein FAM117A (451 aa).

Positions 1-25 (MSGAAAGGRGGGSWGPGRGGAGGLR) are enriched in gly residues. Disordered regions lie at residues 1-83 (MSGA…RPQP) and 164-183 (RTKL…VQGD). Phosphoserine is present on residues Ser29 and Ser67. Residues 149 to 175 (TDHRKEITKLKQQLQRTKLSRSGKEKE) adopt a coiled-coil conformation. 2 positions are modified to phosphoserine: Ser193 and Ser213. The interval 242–293 (DGHRAPAPPQNSSCDHSLLLEPGNLTSSPSVPLASPQPPSQASREEHQGATE) is disordered. 2 positions are modified to phosphoserine: Ser318 and Ser326. The residue at position 353 (Thr353) is a Phosphothreonine. The segment at 403–451 (SPGSPLPTASPRAPRKGPEASKASSLPSEPWQRSPPSEESVLFQSSLVV) is disordered. Residues Ser412 and Ser426 each carry the phosphoserine modification. The segment covering 436–451 (SPPSEESVLFQSSLVV) has biased composition (polar residues).

The protein belongs to the FAM117 family.

The sequence is that of Protein FAM117A (Fam117a) from Mus musculus (Mouse).